Reading from the N-terminus, the 543-residue chain is CBS domain-containing protein CBSCBSPB1 (543 aa).

A disordered region spans residues 1 to 35 (MASQGGPRRSLSVTTASLHGKKKSMDMAERGLDTG). Residue S17 is modified to Phosphoserine. Over residues 23–35 (KSMDMAERGLDTG) the composition is skewed to basic and acidic residues. CBS domains follow at residues 59–118 (RLSK…NVEE), 125–183 (MTKN…RAAE), 225–285 (IIPD…LPPS), and 293–350 (MTQN…AGTT). The interval 372 to 393 (LSPNEDDEDSRSESSMKVASEA) is disordered. The PB1 domain occupies 402-489 (ANTFSFKIED…KSLRLHLDDS (88 aa)). The chain crosses the membrane as a helical span at residues 518 to 538 (AYSGVAAGAALVAGLGFMAFL).

The protein resides in the membrane. The protein is CBS domain-containing protein CBSCBSPB1 (CBSCBSPB1) of Arabidopsis thaliana (Mouse-ear cress).